We begin with the raw amino-acid sequence, 226 residues long: Brachyurin (226 aa).

A Peptidase S1 domain is found at 1 to 223 (IVGGVEAVPN…FLDWIQTQTG (223 aa)). C26 and C42 are disulfide-bonded. Catalysis depends on charge relay system residues H41 and D87. Intrachain disulfides connect C151/C164 and C174/C200. The active-site Charge relay system is the S178.

This sequence belongs to the peptidase S1 family.

It catalyses the reaction Hydrolysis of proteins, with broad specificity for peptide bonds. Native collagen is cleaved about 75% of the length of the molecule from the N-terminus. Low activity on small molecule substrates of both trypsin and chymotrypsin.. This enzyme is a serine protease capable of degrading the native triple helix of collagen. The chain is Brachyurin from Leptuca pugilator (Atlantic sand fiddler crab).